The following is a 519-amino-acid chain: Bifunctional pantoate ligase/cytidylate kinase (519 aa).

A pantoate--beta-alanine ligase region spans residues 1–282 (MNLTILRTKT…CGNTRLIDHG (282 aa)). 30–37 (MGGLHQGH) contacts ATP. Histidine 37 (proton donor) is an active-site residue. Position 66 (glutamine 66) interacts with (R)-pantoate. Residue glutamine 66 coordinates beta-alanine. An ATP-binding site is contributed by 155–158 (GEKD). A (R)-pantoate-binding site is contributed by glutamine 161. Residue 192–195 (CSSR) participates in ATP binding. A cytidylate kinase region spans residues 283-519 (FLMKRNPIVA…PQEVWPTNAT (237 aa)).

It in the N-terminal section; belongs to the pantothenate synthetase family. The protein in the C-terminal section; belongs to the cytidylate kinase family. Type 1 subfamily.

Its subcellular location is the cytoplasm. The catalysed reaction is (R)-pantoate + beta-alanine + ATP = (R)-pantothenate + AMP + diphosphate + H(+). It carries out the reaction CMP + ATP = CDP + ADP. It catalyses the reaction dCMP + ATP = dCDP + ADP. The protein operates within cofactor biosynthesis; (R)-pantothenate biosynthesis; (R)-pantothenate from (R)-pantoate and beta-alanine: step 1/1. Catalyzes the condensation of pantoate with beta-alanine in an ATP-dependent reaction via a pantoyl-adenylate intermediate. Its function is as follows. Catalyzes the transfer of a phosphate group from ATP to either CMP or dCMP to form CDP or dCDP and ADP, respectively. This is Bifunctional pantoate ligase/cytidylate kinase from Prochlorococcus marinus (strain SARG / CCMP1375 / SS120).